A 352-amino-acid chain; its full sequence is tRNA pseudouridine synthase D (352 aa).

Aspartate 81 acts as the Nucleophile in catalysis. Residues 157–303 (GIPNYFGAQR…MSHERRILRL (147 aa)) enclose the TRUD domain.

This sequence belongs to the pseudouridine synthase TruD family.

It carries out the reaction uridine(13) in tRNA = pseudouridine(13) in tRNA. Functionally, responsible for synthesis of pseudouridine from uracil-13 in transfer RNAs. The sequence is that of tRNA pseudouridine synthase D from Pseudomonas fluorescens (strain Pf0-1).